The sequence spans 298 residues: 4-hydroxy-3-methylbut-2-enyl diphosphate reductase (298 aa).

C12 contacts [4Fe-4S] cluster. (2E)-4-hydroxy-3-methylbut-2-enyl diphosphate is bound by residues H40 and H78. Positions 40 and 78 each coordinate dimethylallyl diphosphate. Isopentenyl diphosphate-binding residues include H40 and H78. C100 is a [4Fe-4S] cluster binding site. Residue H128 coordinates (2E)-4-hydroxy-3-methylbut-2-enyl diphosphate. A dimethylallyl diphosphate-binding site is contributed by H128. H128 provides a ligand contact to isopentenyl diphosphate. The active-site Proton donor is the E130. (2E)-4-hydroxy-3-methylbut-2-enyl diphosphate is bound at residue T171. C200 is a [4Fe-4S] cluster binding site. Residues S228, S229, N230, and S270 each contribute to the (2E)-4-hydroxy-3-methylbut-2-enyl diphosphate site. Positions 228, 229, 230, and 270 each coordinate dimethylallyl diphosphate. Residues S228, S229, N230, and S270 each coordinate isopentenyl diphosphate.

Belongs to the IspH family. It depends on [4Fe-4S] cluster as a cofactor.

The catalysed reaction is isopentenyl diphosphate + 2 oxidized [2Fe-2S]-[ferredoxin] + H2O = (2E)-4-hydroxy-3-methylbut-2-enyl diphosphate + 2 reduced [2Fe-2S]-[ferredoxin] + 2 H(+). It catalyses the reaction dimethylallyl diphosphate + 2 oxidized [2Fe-2S]-[ferredoxin] + H2O = (2E)-4-hydroxy-3-methylbut-2-enyl diphosphate + 2 reduced [2Fe-2S]-[ferredoxin] + 2 H(+). Its pathway is isoprenoid biosynthesis; dimethylallyl diphosphate biosynthesis; dimethylallyl diphosphate from (2E)-4-hydroxy-3-methylbutenyl diphosphate: step 1/1. It participates in isoprenoid biosynthesis; isopentenyl diphosphate biosynthesis via DXP pathway; isopentenyl diphosphate from 1-deoxy-D-xylulose 5-phosphate: step 6/6. Functionally, catalyzes the conversion of 1-hydroxy-2-methyl-2-(E)-butenyl 4-diphosphate (HMBPP) into a mixture of isopentenyl diphosphate (IPP) and dimethylallyl diphosphate (DMAPP). Acts in the terminal step of the DOXP/MEP pathway for isoprenoid precursor biosynthesis. The chain is 4-hydroxy-3-methylbut-2-enyl diphosphate reductase from Kosmotoga olearia (strain ATCC BAA-1733 / DSM 21960 / TBF 19.5.1).